A 125-amino-acid polypeptide reads, in one-letter code: Small ribosomal subunit protein bS6 (125 aa).

The interval 94 to 125 (KAETGASSMMKTVEREEARKASQAEFAASNER) is disordered. Residues 105 to 115 (TVEREEARKAS) show a composition bias toward basic and acidic residues.

This sequence belongs to the bacterial ribosomal protein bS6 family.

Binds together with bS18 to 16S ribosomal RNA. The polypeptide is Small ribosomal subunit protein bS6 (Acidovorax ebreus (strain TPSY) (Diaphorobacter sp. (strain TPSY))).